We begin with the raw amino-acid sequence, 920 residues long: Protein translocase subunit SecA (920 aa).

Residues Gln-85, 103–107 (GEGKT), and Asp-514 contribute to the ATP site. Zn(2+) is bound by residues Cys-904, Cys-906, Cys-915, and His-916.

It belongs to the SecA family. As to quaternary structure, monomer and homodimer. Part of the essential Sec protein translocation apparatus which comprises SecA, SecYEG and auxiliary proteins SecDF-YajC and YidC. Zn(2+) serves as cofactor.

It localises to the cell inner membrane. The protein localises to the cytoplasm. The catalysed reaction is ATP + H2O + cellular proteinSide 1 = ADP + phosphate + cellular proteinSide 2.. In terms of biological role, part of the Sec protein translocase complex. Interacts with the SecYEG preprotein conducting channel. Has a central role in coupling the hydrolysis of ATP to the transfer of proteins into and across the cell membrane, serving both as a receptor for the preprotein-SecB complex and as an ATP-driven molecular motor driving the stepwise translocation of polypeptide chains across the membrane. The sequence is that of Protein translocase subunit SecA from Janthinobacterium sp. (strain Marseille) (Minibacterium massiliensis).